The sequence spans 390 residues: Glutamyl-tRNA reductase (390 aa).

Substrate contacts are provided by residues 46-49 (TCNR), Ser96, 101-103 (EAQ), and Gln107. The active-site Nucleophile is the Cys47. Residue 176-181 (GAGEMA) coordinates NADP(+).

The protein belongs to the glutamyl-tRNA reductase family. In terms of assembly, homodimer.

It carries out the reaction (S)-4-amino-5-oxopentanoate + tRNA(Glu) + NADP(+) = L-glutamyl-tRNA(Glu) + NADPH + H(+). It functions in the pathway porphyrin-containing compound metabolism; protoporphyrin-IX biosynthesis; 5-aminolevulinate from L-glutamyl-tRNA(Glu): step 1/2. Its function is as follows. Catalyzes the NADPH-dependent reduction of glutamyl-tRNA(Glu) to glutamate 1-semialdehyde (GSA). The protein is Glutamyl-tRNA reductase of Thermus thermophilus (strain ATCC BAA-163 / DSM 7039 / HB27).